The sequence spans 300 residues: Putative hydrolase ML2424 (300 aa).

Catalysis depends on Asp56, which acts as the Nucleophile. Mg(2+)-binding residues include Asp56, Asp58, and Asp231. Asp58 functions as the Proton donor in the catalytic mechanism.

It belongs to the HAD-like hydrolase superfamily. SerB family. Mg(2+) serves as cofactor.

This Mycobacterium leprae (strain TN) protein is Putative hydrolase ML2424.